We begin with the raw amino-acid sequence, 150 residues long: D-aminoacyl-tRNA deacylase (150 aa).

The Gly-cisPro motif, important for rejection of L-amino acids motif lies at 138-139 (GP).

This sequence belongs to the DTD family. In terms of assembly, homodimer.

Its subcellular location is the cytoplasm. It catalyses the reaction glycyl-tRNA(Ala) + H2O = tRNA(Ala) + glycine + H(+). The catalysed reaction is a D-aminoacyl-tRNA + H2O = a tRNA + a D-alpha-amino acid + H(+). Functionally, an aminoacyl-tRNA editing enzyme that deacylates mischarged D-aminoacyl-tRNAs. Also deacylates mischarged glycyl-tRNA(Ala), protecting cells against glycine mischarging by AlaRS. Acts via tRNA-based rather than protein-based catalysis; rejects L-amino acids rather than detecting D-amino acids in the active site. By recycling D-aminoacyl-tRNA to D-amino acids and free tRNA molecules, this enzyme counteracts the toxicity associated with the formation of D-aminoacyl-tRNA entities in vivo and helps enforce protein L-homochirality. This chain is D-aminoacyl-tRNA deacylase, found in Natranaerobius thermophilus (strain ATCC BAA-1301 / DSM 18059 / JW/NM-WN-LF).